Here is a 150-residue protein sequence, read N- to C-terminus: Profilin (150 aa).

This sequence belongs to the profilin family. In terms of assembly, occurs in many kinds of cells as a complex with monomeric actin in a 1:1 ratio.

The protein localises to the cytoplasm. The protein resides in the cytoskeleton. Binds to actin and affects the structure of the cytoskeleton. At high concentrations, profilin prevents the polymerization of actin, whereas it enhances it at low concentrations. By binding to PIP2, it inhibits the formation of IP3 and DG. The polypeptide is Profilin (Trypanosoma brucei brucei).